The sequence spans 90 residues: Potassium channel toxin BmTXK-beta (90 aa).

The N-terminal stretch at 1–22 is a signal peptide; sequence MMKQQFFLFLAVIVMISSVIEA. A propeptide spanning residues 23–29 is cleaved from the precursor; the sequence is GRGKEIM. The BetaSPN-type CS-alpha/beta domain maps to 55 to 90; sequence EYACPVIEKWCEDHCAAKKAIGKCEDTECKCLKLRK. 3 disulfide bridges follow: cysteine 58-cysteine 78, cysteine 65-cysteine 83, and cysteine 69-cysteine 85.

The protein belongs to the long chain scorpion toxin family. Class 2 subfamily. As to expression, expressed by the venom gland.

The protein resides in the secreted. Its function is as follows. This recombinant peptide reversibly and dose-dependently inhibits the transient outward potassium current (I(To)) of rabbit atrial myocyte and prolongs the action potential duration of rabbit atrial myocyte without affecting the action potential amplitude. Thus, the voltage-gated potassium channels Kv4.1/KCND1, Kv4.2/KCND2, Kv4.3/KCND3 may be the target of this toxin. The polypeptide is Potassium channel toxin BmTXK-beta (Olivierus martensii (Manchurian scorpion)).